We begin with the raw amino-acid sequence, 141 residues long: HTH-type transcriptional repressor NsrR (141 aa).

Residues 2-129 (QLTSFTDYGL…DNYTLADLVE (128 aa)) form the HTH rrf2-type domain. Positions 28-51 (ISEVTEVYGVSRNHMVKIINQLSR) form a DNA-binding region, H-T-H motif. [2Fe-2S] cluster contacts are provided by C91, C96, and C102.

[2Fe-2S] cluster is required as a cofactor.

In terms of biological role, nitric oxide-sensitive repressor of genes involved in protecting the cell against nitrosative stress. May require iron for activity. The protein is HTH-type transcriptional repressor NsrR of Salmonella choleraesuis (strain SC-B67).